The primary structure comprises 105 residues: Large ribosomal subunit protein uL24 (105 aa).

This sequence belongs to the universal ribosomal protein uL24 family. Part of the 50S ribosomal subunit.

One of two assembly initiator proteins, it binds directly to the 5'-end of the 23S rRNA, where it nucleates assembly of the 50S subunit. Functionally, one of the proteins that surrounds the polypeptide exit tunnel on the outside of the subunit. The polypeptide is Large ribosomal subunit protein uL24 (Wolbachia sp. subsp. Brugia malayi (strain TRS)).